We begin with the raw amino-acid sequence, 272 residues long: NADPH-dependent 7-cyano-7-deazaguanine reductase (272 aa).

80–82 provides a ligand contact to substrate; sequence VES. 82-83 is an NADPH binding site; the sequence is SK. Catalysis depends on cysteine 178, which acts as the Thioimide intermediate. Aspartate 185 serves as the catalytic Proton donor. Residue 217–218 participates in substrate binding; the sequence is AE. Residue 246 to 247 coordinates NADPH; it reads RG.

It belongs to the GTP cyclohydrolase I family. QueF type 2 subfamily. As to quaternary structure, homodimer.

It localises to the cytoplasm. It catalyses the reaction 7-aminomethyl-7-carbaguanine + 2 NADP(+) = 7-cyano-7-deazaguanine + 2 NADPH + 3 H(+). It participates in tRNA modification; tRNA-queuosine biosynthesis. Its function is as follows. Catalyzes the NADPH-dependent reduction of 7-cyano-7-deazaguanine (preQ0) to 7-aminomethyl-7-deazaguanine (preQ1). This chain is NADPH-dependent 7-cyano-7-deazaguanine reductase, found in Rickettsia typhi (strain ATCC VR-144 / Wilmington).